Here is a 336-residue protein sequence, read N- to C-terminus: DNA-directed RNA polymerase subunit alpha (336 aa).

Residues 1–235 (MIEFVIPKKL…HFKIVTEGLP (235 aa)) form an alpha N-terminal domain (alpha-NTD) region. Residues 264–336 (RENSDVYNRK…KFGLELRKGE (73 aa)) form an alpha C-terminal domain (alpha-CTD) region.

This sequence belongs to the RNA polymerase alpha chain family. Homodimer. The RNAP catalytic core consists of 2 alpha, 1 beta, 1 beta' and 1 omega subunit. When a sigma factor is associated with the core the holoenzyme is formed, which can initiate transcription.

The catalysed reaction is RNA(n) + a ribonucleoside 5'-triphosphate = RNA(n+1) + diphosphate. Its function is as follows. DNA-dependent RNA polymerase catalyzes the transcription of DNA into RNA using the four ribonucleoside triphosphates as substrates. The chain is DNA-directed RNA polymerase subunit alpha from Thermotoga maritima (strain ATCC 43589 / DSM 3109 / JCM 10099 / NBRC 100826 / MSB8).